The following is a 155-amino-acid chain: uncharacterized protein (155 aa).

One can recognise an N-acetyltransferase domain in the interval 7 to 154 (LQINYKTLEE…VWLPESVELQ (148 aa)).

This is an uncharacterized protein from Brevibacillus brevis (strain 47 / JCM 6285 / NBRC 100599).